The sequence spans 354 residues: 4-hydroxy-3-methylbut-2-en-1-yl diphosphate synthase (flavodoxin) (354 aa).

[4Fe-4S] cluster is bound by residues cysteine 265, cysteine 268, cysteine 300, and glutamate 307.

This sequence belongs to the IspG family. [4Fe-4S] cluster serves as cofactor.

It carries out the reaction (2E)-4-hydroxy-3-methylbut-2-enyl diphosphate + oxidized [flavodoxin] + H2O + 2 H(+) = 2-C-methyl-D-erythritol 2,4-cyclic diphosphate + reduced [flavodoxin]. It participates in isoprenoid biosynthesis; isopentenyl diphosphate biosynthesis via DXP pathway; isopentenyl diphosphate from 1-deoxy-D-xylulose 5-phosphate: step 5/6. Converts 2C-methyl-D-erythritol 2,4-cyclodiphosphate (ME-2,4cPP) into 1-hydroxy-2-methyl-2-(E)-butenyl 4-diphosphate. The chain is 4-hydroxy-3-methylbut-2-en-1-yl diphosphate synthase (flavodoxin) from Hydrogenobaculum sp. (strain Y04AAS1).